We begin with the raw amino-acid sequence, 179 residues long: UPF0227 protein Shewmr7_1806 (179 aa).

The protein belongs to the UPF0227 family.

The polypeptide is UPF0227 protein Shewmr7_1806 (Shewanella sp. (strain MR-7)).